Consider the following 156-residue polypeptide: 6,7-dimethyl-8-ribityllumazine synthase (156 aa).

5-amino-6-(D-ribitylamino)uracil is bound by residues Phe23, 57–59 (AFE), and 81–83 (AVI). Position 86–87 (86–87 (ST)) interacts with (2S)-2-hydroxy-3-oxobutyl phosphate. His89 functions as the Proton donor in the catalytic mechanism. Position 114 (Phe114) interacts with 5-amino-6-(D-ribitylamino)uracil. Arg128 lines the (2S)-2-hydroxy-3-oxobutyl phosphate pocket.

The protein belongs to the DMRL synthase family.

The enzyme catalyses (2S)-2-hydroxy-3-oxobutyl phosphate + 5-amino-6-(D-ribitylamino)uracil = 6,7-dimethyl-8-(1-D-ribityl)lumazine + phosphate + 2 H2O + H(+). Its pathway is cofactor biosynthesis; riboflavin biosynthesis; riboflavin from 2-hydroxy-3-oxobutyl phosphate and 5-amino-6-(D-ribitylamino)uracil: step 1/2. Catalyzes the formation of 6,7-dimethyl-8-ribityllumazine by condensation of 5-amino-6-(D-ribitylamino)uracil with 3,4-dihydroxy-2-butanone 4-phosphate. This is the penultimate step in the biosynthesis of riboflavin. The chain is 6,7-dimethyl-8-ribityllumazine synthase from Brachyspira hyodysenteriae (strain ATCC 49526 / WA1).